A 225-amino-acid chain; its full sequence is MASGIVEGGGSLSDVYSSAKRILLKARDGIERLERFESSSMDSPDLASSVKRDITEVRSLCSNMDTLWRSIPVKSQRDLWRRKTEQVGEEAEYLNLSLEKYMSRNQRKMLEAKERADLLGRASGEGAHILQIFDEEAQAMSSVKNSKRMLEESFSSGVAILSKYAEQRDRLKSAQRKALDVLNTVGLSNSVLRLIERRNRVDTWIKYAGMIATLVILYLFIRWTR.

N-acetylalanine is present on A2. Residues 2–200 (ASGIVEGGGS…VLRLIERRNR (199 aa)) are Cytoplasmic-facing. Residues 201–221 (VDTWIKYAGMIATLVILYLFI) traverse the membrane as a helical; Anchor for type IV membrane protein segment. The Vesicular segment spans residues 222–225 (RWTR).

It belongs to the GOSR2 family.

It is found in the golgi apparatus membrane. Involved in transport of proteins from the cis/medial-Golgi to the trans-Golgi network. This is Membrin-11 (MEMB11) from Arabidopsis thaliana (Mouse-ear cress).